Reading from the N-terminus, the 126-residue chain is Holo-[acyl-carrier-protein] synthase (126 aa).

D9 and E58 together coordinate Mg(2+).

Belongs to the P-Pant transferase superfamily. AcpS family. It depends on Mg(2+) as a cofactor.

It localises to the cytoplasm. It catalyses the reaction apo-[ACP] + CoA = holo-[ACP] + adenosine 3',5'-bisphosphate + H(+). Its function is as follows. Transfers the 4'-phosphopantetheine moiety from coenzyme A to a Ser of acyl-carrier-protein. This Erwinia tasmaniensis (strain DSM 17950 / CFBP 7177 / CIP 109463 / NCPPB 4357 / Et1/99) protein is Holo-[acyl-carrier-protein] synthase.